A 273-amino-acid polypeptide reads, in one-letter code: Large ribosomal subunit protein uL2cz/uL2cy (273 aa).

Disordered regions lie at residues 1 to 20 (MAIH…AVDS) and 224 to 254 (NPVD…PALG).

This sequence belongs to the universal ribosomal protein uL2 family. Part of the 50S ribosomal subunit.

Its subcellular location is the plastid. It is found in the chloroplast. The protein is Large ribosomal subunit protein uL2cz/uL2cy (rpl2-A) of Nuphar advena (Common spatterdock).